The primary structure comprises 273 residues: Formamidopyrimidine-DNA glycosylase (273 aa).

Pro2 (schiff-base intermediate with DNA) is an active-site residue. Residue Glu3 is the Proton donor of the active site. The Proton donor; for beta-elimination activity role is filled by Lys58. DNA is bound by residues His91, Arg109, and Arg154. The FPG-type zinc-finger motif lies at 239–273; that stretch reads FVYARTGEPCRICNAPVRQIVQGQRSTFYCPNCQK. Catalysis depends on Arg263, which acts as the Proton donor; for delta-elimination activity.

This sequence belongs to the FPG family. As to quaternary structure, monomer. Zn(2+) is required as a cofactor.

The enzyme catalyses Hydrolysis of DNA containing ring-opened 7-methylguanine residues, releasing 2,6-diamino-4-hydroxy-5-(N-methyl)formamidopyrimidine.. It carries out the reaction 2'-deoxyribonucleotide-(2'-deoxyribose 5'-phosphate)-2'-deoxyribonucleotide-DNA = a 3'-end 2'-deoxyribonucleotide-(2,3-dehydro-2,3-deoxyribose 5'-phosphate)-DNA + a 5'-end 5'-phospho-2'-deoxyribonucleoside-DNA + H(+). Involved in base excision repair of DNA damaged by oxidation or by mutagenic agents. Acts as a DNA glycosylase that recognizes and removes damaged bases. Has a preference for oxidized purines, such as 7,8-dihydro-8-oxoguanine (8-oxoG). Has AP (apurinic/apyrimidinic) lyase activity and introduces nicks in the DNA strand. Cleaves the DNA backbone by beta-delta elimination to generate a single-strand break at the site of the removed base with both 3'- and 5'-phosphates. The protein is Formamidopyrimidine-DNA glycosylase of Herminiimonas arsenicoxydans.